A 303-amino-acid chain; its full sequence is Oxygen-dependent coproporphyrinogen-III oxidase (303 aa).

Residue serine 93 participates in substrate binding. Residues histidine 97 and histidine 107 each contribute to the a divalent metal cation site. The Proton donor role is filled by histidine 107. 109–111 (NVR) contacts substrate. Positions 149 and 179 each coordinate a divalent metal cation. The segment at 244 to 279 (YVEFNLVFDRGTLFGLQSGGRTESILLSMPPLAQWR) is important for dimerization. Residue 262 to 264 (GGR) participates in substrate binding.

Belongs to the aerobic coproporphyrinogen-III oxidase family. In terms of assembly, homodimer. It depends on a divalent metal cation as a cofactor.

It localises to the cytoplasm. The catalysed reaction is coproporphyrinogen III + O2 + 2 H(+) = protoporphyrinogen IX + 2 CO2 + 2 H2O. Its pathway is porphyrin-containing compound metabolism; protoporphyrin-IX biosynthesis; protoporphyrinogen-IX from coproporphyrinogen-III (O2 route): step 1/1. In terms of biological role, involved in the heme biosynthesis. Catalyzes the aerobic oxidative decarboxylation of propionate groups of rings A and B of coproporphyrinogen-III to yield the vinyl groups in protoporphyrinogen-IX. In Bordetella pertussis (strain Tohama I / ATCC BAA-589 / NCTC 13251), this protein is Oxygen-dependent coproporphyrinogen-III oxidase.